The following is a 218-amino-acid chain: Lipoprotein-releasing system ATP-binding protein LolD (218 aa).

The region spanning 2-218 is the ABC transporter domain; it reads IKLEGITKSF…HMVDGTIKKD (217 aa). 34–41 provides a ligand contact to ATP; sequence GPSGAGKT.

It belongs to the ABC transporter superfamily. Lipoprotein translocase (TC 3.A.1.125) family. In terms of assembly, the complex is composed of two ATP-binding proteins (LolD) and two transmembrane proteins (LolC and LolE).

The protein resides in the cell inner membrane. Functionally, part of the ABC transporter complex LolCDE involved in the translocation of mature outer membrane-directed lipoproteins, from the inner membrane to the periplasmic chaperone, LolA. Responsible for the formation of the LolA-lipoprotein complex in an ATP-dependent manner. This Bacteroides thetaiotaomicron (strain ATCC 29148 / DSM 2079 / JCM 5827 / CCUG 10774 / NCTC 10582 / VPI-5482 / E50) protein is Lipoprotein-releasing system ATP-binding protein LolD.